The chain runs to 339 residues: DNA-directed RNA polymerase subunit alpha (339 aa).

Residues 1 to 233 (MVREEITGST…DLFLPFLHTE (233 aa)) form an alpha N-terminal domain (alpha-NTD) region. The interval 264-339 (KKGIPLNCIF…IDLPKNKFSL (76 aa)) is alpha C-terminal domain (alpha-CTD).

Belongs to the RNA polymerase alpha chain family. As to quaternary structure, in plastids the minimal PEP RNA polymerase catalytic core is composed of four subunits: alpha, beta, beta', and beta''. When a (nuclear-encoded) sigma factor is associated with the core the holoenzyme is formed, which can initiate transcription.

The protein localises to the plastid. Its subcellular location is the chloroplast. It catalyses the reaction RNA(n) + a ribonucleoside 5'-triphosphate = RNA(n+1) + diphosphate. Its function is as follows. DNA-dependent RNA polymerase catalyzes the transcription of DNA into RNA using the four ribonucleoside triphosphates as substrates. In Zea mays (Maize), this protein is DNA-directed RNA polymerase subunit alpha.